The sequence spans 1006 residues: DNA polymerase (1006 aa).

It belongs to the DNA polymerase type-B family. Interacts with OPG148. Component of the Uracil-DNA glycosylase(UDG)-OPG148-polymerase complex; OPG148 and OPG116/UDG form a heterodimeric processivity factor that associates with OPG071 to form the processive polymerase holoenzyme.

The catalysed reaction is DNA(n) + a 2'-deoxyribonucleoside 5'-triphosphate = DNA(n+1) + diphosphate. In terms of biological role, catalyzes DNA synthesis. Acquires processivity by associating with a heterodimeric processivity factor comprised of the viral OPG148 and OPG116 proteins, thereby forming the DNA polymerase holoenzyme. Displays 3'- to 5' exonuclease activity. Might participate in viral DNA recombination. Does not perform OPG116/D4synthesis across an abasic site. The chain is DNA polymerase (OPG071) from Homo sapiens (Human).